The primary structure comprises 325 residues: Aldo-keto reductase family 1 member A1 (325 aa).

Residue Thr-2 is modified to N-acetylthreonine. Residue Ser-4 is modified to Phosphoserine. NADP(+) contacts are provided by residues 11–20, Thr-21, and Trp-22; that span reads GQKMPLIGLG. A glycan (N-linked (Glc) (glycation) lysine) is linked at Lys-23. Ser-38 is subject to Phosphoserine. An NADP(+)-binding site is contributed by Asp-45. Tyr-50 functions as the Proton donor in the catalytic mechanism. Residues Lys-68 and Lys-85 are each glycosylated (N-linked (Glc) (glycation) lysine). The residue at position 127 (Lys-127) is an N6-acetyllysine; alternate. Lys-127 is modified (N6-succinyllysine; alternate). Residue Lys-141 is glycosylated (N-linked (Glc) (glycation) lysine). Lys-145 carries the N6-succinyllysine modification. An N-linked (Glc) (glycation) lysine glycan is attached at Lys-153. Positions 162, 163, 211, 213, 215, 216, 263, 264, 265, 266, 269, 272, and 273 each coordinate NADP(+). Position 211 is a phosphoserine (Ser-211).

The protein belongs to the aldo/keto reductase family. In terms of assembly, monomer. In terms of tissue distribution, widely expressed.

The protein resides in the cytoplasm. Its subcellular location is the cytosol. The protein localises to the apical cell membrane. The catalysed reaction is a primary alcohol + NADP(+) = an aldehyde + NADPH + H(+). It carries out the reaction L-gulonate + NADP(+) = aldehydo-D-glucuronate + NADPH + H(+). It catalyses the reaction L-gulono-1,4-lactone + NADP(+) = D-glucurono-3,6-lactone + NADPH + H(+). The enzyme catalyses allyl alcohol + NADP(+) = acrolein + NADPH + H(+). The catalysed reaction is glycerol + NADP(+) = D-glyceraldehyde + NADPH + H(+). It carries out the reaction glycerol + NADP(+) = L-glyceraldehyde + NADPH + H(+). It catalyses the reaction hydroxyacetone + NADP(+) = methylglyoxal + NADPH + H(+). The enzyme catalyses 3-deoxyfructose + NADP(+) = 3-deoxyglucosone + NADPH + H(+). The catalysed reaction is (R)-mevalonate + NADP(+) = (R)-mevaldate + NADPH + H(+). It carries out the reaction pyridine 3-methanol + NADP(+) = pyridine-3-carbaldehyde + NADPH + H(+). It catalyses the reaction S-nitroso-CoA + NADPH + H(+) = sulfinamide-CoA + NADP(+). The enzyme catalyses S-nitrosoglutathione + NADPH + H(+) = S-(hydroxysulfenamide)glutathione + NADP(+). Functionally, catalyzes the NADPH-dependent reduction of a wide variety of carbonyl-containing compounds to their corresponding alcohols. Displays enzymatic activity towards endogenous metabolites such as aromatic and aliphatic aldehydes, ketones, monosaccharides and bile acids. Plays an important role in ascorbic acid biosynthesis by catalyzing the reduction of D-glucuronic acid and D-glucurono-gamma-lactone. Functions as a detoxifiying enzyme by reducing a range of toxic aldehydes. Reduces methylglyoxal and 3-deoxyglucosone, which are present at elevated levels under hyperglycemic conditions and are cytotoxic. Involved also in the detoxification of lipid-derived aldehydes like acrolein. Plays a role in the activation of procarcinogens, such as polycyclic aromatic hydrocarbon trans-dihydrodiols, and in the metabolism of various xenobiotics and drugs. Also acts as an inhibitor of protein S-nitrosylation by mediating degradation of S-nitroso-coenzyme A (S-nitroso-CoA), a cofactor required to S-nitrosylate proteins. S-nitroso-CoA reductase activity is involved in reprogramming intermediary metabolism in renal proximal tubules, notably by inhibiting protein S-nitrosylation of isoform 2 of PKM (PKM2). Also acts as a S-nitroso-glutathione reductase by catalyzing the NADPH-dependent reduction of S-nitrosoglutathione. Displays no reductase activity towards retinoids. The sequence is that of Aldo-keto reductase family 1 member A1 (Akr1a1) from Rattus norvegicus (Rat).